Here is a 95-residue protein sequence, read N- to C-terminus: Small ribosomal subunit protein uS19 (95 aa).

Belongs to the universal ribosomal protein uS19 family.

In terms of biological role, protein S19 forms a complex with S13 that binds strongly to the 16S ribosomal RNA. The protein is Small ribosomal subunit protein uS19 of Thermotoga sp. (strain RQ2).